The primary structure comprises 448 residues: Glutamyl-tRNA reductase (448 aa).

Residues 49–52 (TCNR), S109, 114–116 (ETQ), and Q120 each bind substrate. C50 acts as the Nucleophile in catalysis. 189 to 194 (GAGEMG) provides a ligand contact to NADP(+).

It belongs to the glutamyl-tRNA reductase family. In terms of assembly, homodimer.

It catalyses the reaction (S)-4-amino-5-oxopentanoate + tRNA(Glu) + NADP(+) = L-glutamyl-tRNA(Glu) + NADPH + H(+). Its pathway is porphyrin-containing compound metabolism; protoporphyrin-IX biosynthesis; 5-aminolevulinate from L-glutamyl-tRNA(Glu): step 1/2. Functionally, catalyzes the NADPH-dependent reduction of glutamyl-tRNA(Glu) to glutamate 1-semialdehyde (GSA). This Staphylococcus epidermidis (strain ATCC 12228 / FDA PCI 1200) protein is Glutamyl-tRNA reductase.